A 172-amino-acid chain; its full sequence is Translationally-controlled tumor protein homolog (172 aa).

In terms of domain architecture, TCTP spans 1–172 (MIIYKDTVTE…FKDGLISEKC (172 aa)).

Belongs to the TCTP family.

It is found in the cytoplasm. Its function is as follows. Involved in calcium binding and microtubule stabilization. The chain is Translationally-controlled tumor protein homolog (tpt1) from Xenopus tropicalis (Western clawed frog).